Consider the following 225-residue polypeptide: 7-cyano-7-deazaguanine synthase (225 aa).

ATP is bound at residue 10–20 (LSGGIDSATAA). 4 residues coordinate Zn(2+): Cys-191, Cys-199, Cys-202, and Cys-205.

The protein belongs to the QueC family. It depends on Zn(2+) as a cofactor.

The enzyme catalyses 7-carboxy-7-deazaguanine + NH4(+) + ATP = 7-cyano-7-deazaguanine + ADP + phosphate + H2O + H(+). The protein operates within purine metabolism; 7-cyano-7-deazaguanine biosynthesis. Its function is as follows. Catalyzes the ATP-dependent conversion of 7-carboxy-7-deazaguanine (CDG) to 7-cyano-7-deazaguanine (preQ(0)). This chain is 7-cyano-7-deazaguanine synthase, found in Prochlorococcus marinus (strain NATL2A).